The sequence spans 595 residues: Coiled-coil domain-containing protein 22 (595 aa).

The segment at 1–321 is sufficient for interaction with COMMD1; it reads MEEADRILIH…VSDVPATSQR (321 aa). The interval 1-447 is sufficicient and required for interaction with CCDC93; sequence MEEADRILIH…LQDCRELESS (447 aa). Residues 218–230 are compositionally biased toward basic and acidic residues; sequence TGRDRAGDEDWGH. The disordered stretch occupies residues 218 to 243; the sequence is TGRDRAGDEDWGHRTSRLPAQEDTRA. Positions 323–369 form a coiled coil; it reads EQDTWAAQEQELESLREQLEGVNHNIEEVEANMKTLGINLVQVETEC. Serine 410 carries the phosphoserine modification. Coiled coils occupy residues 447–484 and 564–595; these read SRRL…LETL and GKKT…VREA.

Belongs to the CCDC22 family. In terms of assembly, component of the commander complex consisting of the CCC subcomplex and the retriever subcomplex. Component of the CCC (COMMD/CCDC22/CCDC93) subcomplex consisting of COMMD1, COMMD2, COMMD3, COMMD4, COMMD5, COMMD6, COMMD7, COMMD8, COMMD9, COMMD10, CCDC22 and CCDC93. Forms a coiled-coil heterodimer with CCDC22; this heterodimer interacts with the guanine nucleotide exchange factor DENND10; the interaction is direct. Interacts with CUL1, CUL2, CUL3, SKP1, BTRC. Interacts with SNX17 and SNX31. Interacts with CPNE1 and CPNE4.

Its subcellular location is the endosome. The protein resides in the cytoplasm. The protein localises to the cytoskeleton. It localises to the microtubule organizing center. It is found in the centrosome. Its function is as follows. Component of the commander complex that is essential for endosomal recycling of transmembrane cargos; the Commander complex is composed of composed of the CCC subcomplex and the retriever subcomplex. Component of the CCC complex, which is involved in the regulation of endosomal recycling of surface proteins, including integrins, signaling receptor and channels. Involved in regulation of NF-kappa-B signaling. Promotes ubiquitination of I-kappa-B-kinase subunit IKBKB and its subsequent proteasomal degradation leading to NF-kappa-B activation; the function may involve association with COMMD8 and a CUL1-dependent E3 ubiquitin ligase complex. May down-regulate NF-kappa-B activity via association with COMMD1 and involving a CUL2-dependent E3 ubiquitin ligase complex. Regulates the cellular localization of COMM domain-containing proteins, such as COMMD1 and COMMD10. Component of the CCC complex, which is involved in the regulation of endosomal recycling of surface proteins, including integrins, signaling receptor and channels. The CCC complex associates with SNX17, retriever and WASH complexes to prevent lysosomal degradation and promote cell surface recycling of numerous cargos such as integrins ITGA5:ITGB1. Plays a role in copper ion homeostasis. Involved in copper-dependent ATP7A trafficking between the trans-Golgi network and vesicles in the cell periphery; the function is proposed to depend on its association within the CCC complex and cooperation with the WASH complex on early endosomes. The chain is Coiled-coil domain-containing protein 22 (CCDC22) from Bos taurus (Bovine).